We begin with the raw amino-acid sequence, 295 residues long: Large ribosomal subunit protein uL2 (295 aa).

Residues 243–295 are disordered; sequence WRPHTRGTAMNPVDHPHGGGEGRTRGKHPESPWDGRRRDTRREGVRSTPISLS. Basic and acidic residues predominate over residues 256 to 287; it reads DHPHGGGEGRTRGKHPESPWDGRRRDTRREGV.

This sequence belongs to the universal ribosomal protein uL2 family. In terms of assembly, part of the 50S ribosomal subunit. Forms a bridge to the 30S subunit in the 70S ribosome.

In terms of biological role, one of the primary rRNA binding proteins. Required for association of the 30S and 50S subunits to form the 70S ribosome, for tRNA binding and peptide bond formation. It has been suggested to have peptidyltransferase activity; this is somewhat controversial. Makes several contacts with the 16S rRNA in the 70S ribosome. This chain is Large ribosomal subunit protein uL2, found in Aquifex pyrophilus.